Consider the following 218-residue polypeptide: Small ribosomal subunit protein uS3 (218 aa).

One can recognise a KH type-2 domain in the interval I38–K106.

The protein belongs to the universal ribosomal protein uS3 family. In terms of assembly, part of the 30S ribosomal subunit. Forms a tight complex with proteins S10 and S14.

Its function is as follows. Binds the lower part of the 30S subunit head. Binds mRNA in the 70S ribosome, positioning it for translation. This Bacillus licheniformis (strain ATCC 14580 / DSM 13 / JCM 2505 / CCUG 7422 / NBRC 12200 / NCIMB 9375 / NCTC 10341 / NRRL NRS-1264 / Gibson 46) protein is Small ribosomal subunit protein uS3.